The sequence spans 262 residues: Hemin import ATP-binding protein HmuV (262 aa).

One can recognise an ABC transporter domain in the interval 5 to 242; it reads LEARKAGFAT…ELIGAVFDVE (238 aa). An ATP-binding site is contributed by 37-44; it reads GPNGAGKS.

Belongs to the ABC transporter superfamily. Heme (hemin) importer (TC 3.A.1.14.5) family. In terms of assembly, the complex is composed of two ATP-binding proteins (HmuV), two transmembrane proteins (HmuU) and a solute-binding protein (HmuT).

It localises to the cell inner membrane. In terms of biological role, part of the ABC transporter complex HmuTUV involved in hemin import. Responsible for energy coupling to the transport system. This is Hemin import ATP-binding protein HmuV from Rhodopseudomonas palustris (strain HaA2).